The chain runs to 367 residues: Alanine racemase (367 aa).

K40 (proton acceptor; specific for D-alanine) is an active-site residue. An N6-(pyridoxal phosphate)lysine modification is found at K40. A substrate-binding site is contributed by R136. Y263 serves as the catalytic Proton acceptor; specific for L-alanine. M310 is a binding site for substrate.

Belongs to the alanine racemase family. Pyridoxal 5'-phosphate is required as a cofactor.

The catalysed reaction is L-alanine = D-alanine. It participates in amino-acid biosynthesis; D-alanine biosynthesis; D-alanine from L-alanine: step 1/1. Functionally, catalyzes the interconversion of L-alanine and D-alanine. May also act on other amino acids. The polypeptide is Alanine racemase (alr) (Lactococcus lactis subsp. lactis (strain IL1403) (Streptococcus lactis)).